The sequence spans 330 residues: Glycerol-3-phosphate dehydrogenase [NAD(P)+] (330 aa).

Trp-11, Arg-31, His-32, and Lys-105 together coordinate NADPH. Sn-glycerol 3-phosphate is bound by residues Lys-105 and Gly-133. An NADPH-binding site is contributed by Ala-137. Residues Lys-188, Asp-241, Ser-251, Arg-252, and Asn-253 each coordinate sn-glycerol 3-phosphate. Lys-188 (proton acceptor) is an active-site residue. Arg-252 contacts NADPH. Leu-277 and Glu-279 together coordinate NADPH.

This sequence belongs to the NAD-dependent glycerol-3-phosphate dehydrogenase family.

Its subcellular location is the cytoplasm. It carries out the reaction sn-glycerol 3-phosphate + NAD(+) = dihydroxyacetone phosphate + NADH + H(+). The enzyme catalyses sn-glycerol 3-phosphate + NADP(+) = dihydroxyacetone phosphate + NADPH + H(+). It participates in membrane lipid metabolism; glycerophospholipid metabolism. In terms of biological role, catalyzes the reduction of the glycolytic intermediate dihydroxyacetone phosphate (DHAP) to sn-glycerol 3-phosphate (G3P), the key precursor for phospholipid synthesis. This is Glycerol-3-phosphate dehydrogenase [NAD(P)+] from Orientia tsutsugamushi (strain Boryong) (Rickettsia tsutsugamushi).